An 88-amino-acid polypeptide reads, in one-letter code: Mitochondrial import inner membrane translocase subunit TIM9 (88 aa).

The short motif at 35-59 (CFDDCVNDFTSNNLTTKETGCITKC) is the Twin CX3C motif element. 2 cysteine pairs are disulfide-bonded: C35–C59 and C39–C55.

Belongs to the small Tim family. Heterohexamer; composed of 3 copies of TIM9 and 3 copies of TIM10, named soluble 70 kDa complex. Associates with the TIM22 complex, whose core is composed of TIM22 and TIM54. Interacts with the transmembrane regions of multi-pass transmembrane proteins in transit.

The protein resides in the mitochondrion inner membrane. Mitochondrial intermembrane chaperone that participates in the import and insertion of multi-pass transmembrane proteins into the mitochondrial inner membrane. Also required for the transfer of beta-barrel precursors from the TOM complex to the sorting and assembly machinery (SAM complex) of the outer membrane. Acts as a chaperone-like protein that protects the hydrophobic precursors from aggregation and guide them through the mitochondrial intermembrane space. This is Mitochondrial import inner membrane translocase subunit TIM9 (TIM9) from Debaryomyces hansenii (strain ATCC 36239 / CBS 767 / BCRC 21394 / JCM 1990 / NBRC 0083 / IGC 2968) (Yeast).